The sequence spans 161 residues: Large ribosomal subunit protein bL9 (161 aa).

It belongs to the bacterial ribosomal protein bL9 family.

Functionally, binds to the 23S rRNA. This chain is Large ribosomal subunit protein bL9, found in Blochmanniella floridana.